The sequence spans 297 residues: tRNA pseudouridine synthase B (297 aa).

D44 serves as the catalytic Nucleophile.

The protein belongs to the pseudouridine synthase TruB family. Type 1 subfamily.

It catalyses the reaction uridine(55) in tRNA = pseudouridine(55) in tRNA. Responsible for synthesis of pseudouridine from uracil-55 in the psi GC loop of transfer RNAs. The chain is tRNA pseudouridine synthase B from Corynebacterium efficiens (strain DSM 44549 / YS-314 / AJ 12310 / JCM 11189 / NBRC 100395).